The chain runs to 458 residues: O-acyltransferase WSD (458 aa).

The active-site Proton acceptor is histidine 133.

Belongs to the long-chain O-acyltransferase family.

It carries out the reaction a long chain fatty alcohol + a fatty acyl-CoA = a wax ester + CoA. The catalysed reaction is an acyl-CoA + a 1,2-diacyl-sn-glycerol = a triacyl-sn-glycerol + CoA. Its pathway is glycerolipid metabolism; triacylglycerol biosynthesis. Functionally, bifunctional wax ester synthase/diacylglycerol acyltransferase (WS and DGAT). Catalyzes the terminal and only committed step in triacylglycerol synthesis by using diacylglycerol and fatty acyl CoA as substrates. Required for storage lipid synthesis. WS uses C(12)-CoA to C(18)-CoA substrates whereas DGAT prefers C(20)-CoA. Upon expression in E.coli and Pseudomonas citronellolis (DSM 50332) both WS and DGAT activities increase. This is O-acyltransferase WSD (wax-dgaT) from Acinetobacter baylyi (strain ATCC 33305 / BD413 / ADP1).